Reading from the N-terminus, the 395-residue chain is Choline/ethanolamine kinase (395 aa).

Alanine 2 is modified (N-acetylalanine). Residues 75–81 (SGGLSNL), arginine 104, 146–152 (QYIPSRP), glutamine 244, and aspartate 264 contribute to the ATP site. 77-79 (GLS) serves as a coordination point for phosphocholine.

The protein belongs to the choline/ethanolamine kinase family. In terms of assembly, homodimer, and heterodimer with CHKA.

It catalyses the reaction choline + ATP = phosphocholine + ADP + H(+). The enzyme catalyses ethanolamine + ATP = phosphoethanolamine + ADP + H(+). The protein operates within phospholipid metabolism; phosphatidylethanolamine biosynthesis; phosphatidylethanolamine from ethanolamine: step 1/3. Has a key role in phospholipid metabolism, and catalyzes the first step of phosphatidylethanolamine and phosphatidylcholine biosynthesis. This Homo sapiens (Human) protein is Choline/ethanolamine kinase (CHKB).